The sequence spans 160 residues: Type IV major fimbrial protein FimA (160 aa).

Residues 1–7 (MKSLQKG) constitute a propeptide, leader sequence. N-methylphenylalanine is present on Phe8. The chain crosses the membrane as a helical span at residues 8–28 (FTLIELMIVVAIIGILAAFAI). A disulfide bridge links Cys63 with Cys106.

It belongs to the N-Me-Phe pilin family. In terms of assembly, the pili are polar flexible filaments of about 5.4 nanometers diameter and 2.5 micrometers average length; they consist of only a single polypeptide chain arranged in a helical configuration of five subunits per turn in the assembled pilus.

Its subcellular location is the fimbrium. The protein resides in the membrane. Major component of the type IV fimbriae that plays an essential role in twitching motility, natural transformation, and protease secretion. The protein is Type IV major fimbrial protein FimA (fimA) of Dichelobacter nodosus (Bacteroides nodosus).